The primary structure comprises 608 residues: AAA ATPase forming ring-shaped complexes (608 aa).

Positions 45-79 form a coiled coil; it reads AQEYDAVLRRLSAAEATRDNMSRQIRGAGEKNRKL. 302 to 307 contributes to the ATP binding site; it reads GNGKTM.

This sequence belongs to the AAA ATPase family. Homohexamer. Assembles into a hexameric ring structure.

In Rothia mucilaginosa (strain DY-18) (Stomatococcus mucilaginosus), this protein is AAA ATPase forming ring-shaped complexes.